The primary structure comprises 405 residues: Acetylornithine/succinyldiaminopimelate aminotransferase (405 aa).

Pyridoxal 5'-phosphate-binding positions include 108–109 and Phe141; that span reads GT. Arg144 provides a ligand contact to N(2)-acetyl-L-ornithine. Pyridoxal 5'-phosphate is bound at residue 226–229; sequence DEVQ. Residue Lys255 is modified to N6-(pyridoxal phosphate)lysine. Ser283 lines the N(2)-acetyl-L-ornithine pocket. Position 284 (Thr284) interacts with pyridoxal 5'-phosphate.

Belongs to the class-III pyridoxal-phosphate-dependent aminotransferase family. ArgD subfamily. Homodimer. Pyridoxal 5'-phosphate serves as cofactor.

It localises to the cytoplasm. The enzyme catalyses N(2)-acetyl-L-ornithine + 2-oxoglutarate = N-acetyl-L-glutamate 5-semialdehyde + L-glutamate. It catalyses the reaction N-succinyl-(2S,6S)-2,6-diaminopimelate + 2-oxoglutarate = (S)-2-succinylamino-6-oxoheptanedioate + L-glutamate. Its pathway is amino-acid biosynthesis; L-arginine biosynthesis; N(2)-acetyl-L-ornithine from L-glutamate: step 4/4. The protein operates within amino-acid biosynthesis; L-lysine biosynthesis via DAP pathway; LL-2,6-diaminopimelate from (S)-tetrahydrodipicolinate (succinylase route): step 2/3. Involved in both the arginine and lysine biosynthetic pathways. This is Acetylornithine/succinyldiaminopimelate aminotransferase from Salmonella typhi.